The following is a 239-amino-acid chain: tRNA (guanine-N(7)-)-methyltransferase (239 aa).

E69, E94, D121, and D144 together coordinate S-adenosyl-L-methionine. D144 is an active-site residue. Substrate is bound at residue K148. Residues 150 to 155 are interaction with RNA; sequence RHNKRR. Substrate contacts are provided by residues D180 and 217 to 220; that span reads TKFE.

It belongs to the class I-like SAM-binding methyltransferase superfamily. TrmB family. As to quaternary structure, monomer.

The enzyme catalyses guanosine(46) in tRNA + S-adenosyl-L-methionine = N(7)-methylguanosine(46) in tRNA + S-adenosyl-L-homocysteine. It functions in the pathway tRNA modification; N(7)-methylguanine-tRNA biosynthesis. In terms of biological role, catalyzes the formation of N(7)-methylguanine at position 46 (m7G46) in tRNA. This Yersinia pseudotuberculosis serotype O:1b (strain IP 31758) protein is tRNA (guanine-N(7)-)-methyltransferase.